Consider the following 182-residue polypeptide: Large ribosomal subunit protein uL6 (182 aa).

The protein belongs to the universal ribosomal protein uL6 family. As to quaternary structure, part of the 50S ribosomal subunit.

Its function is as follows. This protein binds to the 23S rRNA, and is important in its secondary structure. It is located near the subunit interface in the base of the L7/L12 stalk, and near the tRNA binding site of the peptidyltransferase center. This is Large ribosomal subunit protein uL6 from Caldicellulosiruptor bescii (strain ATCC BAA-1888 / DSM 6725 / KCTC 15123 / Z-1320) (Anaerocellum thermophilum).